A 148-amino-acid polypeptide reads, in one-letter code: Lysozyme C, non-stomach isozyme (148 aa).

Positions 1 to 18 are cleaved as a signal peptide; sequence MKALLILGLLLFSVAVQG. Residues 19 to 148 form the C-type lysozyme domain; sequence KVFERCELAR…LTSYIQGCGV (130 aa). 4 disulfide bridges follow: C24–C146, C48–C134, C83–C99, and C95–C113. Residues E53 and D71 contribute to the active site.

Belongs to the glycosyl hydrolase 22 family. Expressed in blood cells.

It carries out the reaction Hydrolysis of (1-&gt;4)-beta-linkages between N-acetylmuramic acid and N-acetyl-D-glucosamine residues in a peptidoglycan and between N-acetyl-D-glucosamine residues in chitodextrins.. Its function is as follows. Lysozymes have primarily a bacteriolytic function; those in tissues and body fluids are associated with the monocyte-macrophage system and enhance the activity of immunoagents. The sequence is that of Lysozyme C, non-stomach isozyme (LYS) from Bos taurus (Bovine).